A 474-amino-acid chain; its full sequence is Type I restriction enzyme EcoBI specificity subunit (474 aa).

This sequence belongs to the type-I restriction system S methylase family. In terms of assembly, the type I restriction/modification system is composed of three polypeptides R, M and S. The restriction enzyme has stoichiometry R(2)M(2)S(1) while the methyltransferase is M(2)S(1).

Its function is as follows. The specificity (S) subunit of a type I restriction enzyme; this subunit dictates DNA sequence specificity. The M and S subunits together form a methyltransferase (MTase) that methylates A-3 on the top strand and A-4 on the bottom strand of the sequence 5'-TGAN(8)TGCT-3'. In the presence of the R subunit the complex can also act as an endonuclease, binding to the same target sequence but cutting the DNA some distance from this site. Whether the DNA is cut or modified depends on the methylation state of the target sequence. When the target site is unmodified, the DNA is cut. When the target site is hemimethylated, the complex acts as a maintenance MTase modifying the DNA so that both strands become methylated. After locating a non-methylated recognition site, the enzyme complex serves as a molecular motor that translocates DNA in an ATP-dependent manner until a collision occurs that triggers cleavage. The polypeptide is Type I restriction enzyme EcoBI specificity subunit (Escherichia coli).